The chain runs to 286 residues: ATP synthase gamma chain (286 aa).

This sequence belongs to the ATPase gamma chain family. In terms of assembly, F-type ATPases have 2 components, CF(1) - the catalytic core - and CF(0) - the membrane proton channel. CF(1) has five subunits: alpha(3), beta(3), gamma(1), delta(1), epsilon(1). CF(0) has three main subunits: a, b and c.

Its subcellular location is the cell inner membrane. Functionally, produces ATP from ADP in the presence of a proton gradient across the membrane. The gamma chain is believed to be important in regulating ATPase activity and the flow of protons through the CF(0) complex. The protein is ATP synthase gamma chain of Flavobacterium psychrophilum (strain ATCC 49511 / DSM 21280 / CIP 103535 / JIP02/86).